The following is a 204-amino-acid chain: MSFTVDDRVLALAGIAQALQQVRRIADTGHSDAAAVRTAVESVFRVDASSPQEVFGDRHALKAGLRLLHNYFRSQGQDPILPKLALSVLQLERRFVQEGETVNKVASGIERAQRQAAELGDSGHPDVLANLGGLYADTISHLKPRVMVQGNPHYLGQAGVVAEIRALLLAAVRSAVLWRQLGGSYWDFLFSRKAMIEAVDRQLA.

It belongs to the HflD family.

The protein localises to the cytoplasm. It localises to the cell inner membrane. In Stenotrophomonas maltophilia (strain R551-3), this protein is High frequency lysogenization protein HflD homolog.